A 377-amino-acid chain; its full sequence is Glutamate 5-kinase (377 aa).

Lysine 22 lines the ATP pocket. Residues serine 62, aspartate 149, and asparagine 161 each contribute to the substrate site. ATP contacts are provided by residues 181–182 (TD) and 223–229 (TGGMVTK). The PUA domain maps to 285–359 (QGTLVADSGA…GRNTAQLKRF (75 aa)).

The protein belongs to the glutamate 5-kinase family.

The protein localises to the cytoplasm. It carries out the reaction L-glutamate + ATP = L-glutamyl 5-phosphate + ADP. The protein operates within amino-acid biosynthesis; L-proline biosynthesis; L-glutamate 5-semialdehyde from L-glutamate: step 1/2. Functionally, catalyzes the transfer of a phosphate group to glutamate to form L-glutamate 5-phosphate. The polypeptide is Glutamate 5-kinase (Bifidobacterium adolescentis (strain ATCC 15703 / DSM 20083 / NCTC 11814 / E194a)).